The sequence spans 302 residues: Potassium/proton antiporter CemA (302 aa).

4 helical membrane-spanning segments follow: residues 55 to 75 (VFVS…ITFL), 187 to 207 (FVSF…IIIL), 225 to 247 (FLLI…ELFL), and 262 to 282 (FIFL…KYWI).

This sequence belongs to the CemA family.

Its subcellular location is the plastid. It is found in the chloroplast inner membrane. It catalyses the reaction K(+)(in) + H(+)(out) = K(+)(out) + H(+)(in). In terms of biological role, contributes to K(+)/H(+) antiport activity by supporting proton efflux to control proton extrusion and homeostasis in chloroplasts in a light-dependent manner to modulate photosynthesis. Prevents excessive induction of non-photochemical quenching (NPQ) under continuous-light conditions. Indirectly promotes efficient inorganic carbon uptake into chloroplasts. The sequence is that of Potassium/proton antiporter CemA from Tupiella akineta (Green alga).